The primary structure comprises 208 residues: Small ribosomal subunit protein uS4 (208 aa).

One can recognise an S4 RNA-binding domain in the interval 95-157 (RRIDNVVYRA…DSLKKLVRSN (63 aa)).

It belongs to the universal ribosomal protein uS4 family. As to quaternary structure, part of the 30S ribosomal subunit. Contacts protein S5. The interaction surface between S4 and S5 is involved in control of translational fidelity.

Its function is as follows. One of the primary rRNA binding proteins, it binds directly to 16S rRNA where it nucleates assembly of the body of the 30S subunit. In terms of biological role, with S5 and S12 plays an important role in translational accuracy. This is Small ribosomal subunit protein uS4 from Borrelia hermsii (strain HS1 / DAH).